The following is a 762-amino-acid chain: Catalase-peroxidase (762 aa).

The segment at 1-22 is disordered; sequence MAEAKCPFSQSRSNANVAGGGT. A cross-link (tryptophyl-tyrosyl-methioninium (Trp-Tyr) (with M-268)) is located at residues 96–242; sequence WHSAGTYRVF…LAASHMGLIY (147 aa). The Proton acceptor role is filled by His-97. Residues 242–268 constitute a cross-link (tryptophyl-tyrosyl-methioninium (Tyr-Met) (with W-96)); it reads YVNPEGPDGNPDPVAAARDIRTTFGRM. Heme b is bound at residue His-283.

Belongs to the peroxidase family. Peroxidase/catalase subfamily. In terms of assembly, homodimer or homotetramer. Requires heme b as cofactor. Formation of the three residue Trp-Tyr-Met cross-link is important for the catalase, but not the peroxidase activity of the enzyme.

It localises to the cytoplasm. The enzyme catalyses H2O2 + AH2 = A + 2 H2O. The catalysed reaction is 2 H2O2 = O2 + 2 H2O. In terms of biological role, bifunctional enzyme with both catalase and broad-spectrum peroxidase activity. This is Catalase-peroxidase from Aspergillus niger (strain ATCC MYA-4892 / CBS 513.88 / FGSC A1513).